The primary structure comprises 1384 residues: DNA-directed RNA polymerase subunit beta'' (1384 aa).

Positions 224, 297, 304, and 307 each coordinate Zn(2+).

It belongs to the RNA polymerase beta' chain family. RpoC2 subfamily. In terms of assembly, in plastids the minimal PEP RNA polymerase catalytic core is composed of four subunits: alpha, beta, beta', and beta''. When a (nuclear-encoded) sigma factor is associated with the core the holoenzyme is formed, which can initiate transcription. Zn(2+) serves as cofactor.

It is found in the plastid. The protein resides in the chloroplast. It catalyses the reaction RNA(n) + a ribonucleoside 5'-triphosphate = RNA(n+1) + diphosphate. Functionally, DNA-dependent RNA polymerase catalyzes the transcription of DNA into RNA using the four ribonucleoside triphosphates as substrates. This Sinapis alba (White mustard) protein is DNA-directed RNA polymerase subunit beta''.